The following is a 972-amino-acid chain: Translation initiation factor IF-2 (972 aa).

Residues 49–63 (HLRKSHGATDGDKRK) show a composition bias toward basic and acidic residues. Disordered regions lie at residues 49–86 (HLRK…ARTI) and 100–383 (DDVA…TFQA). Residues 105-114 (GAEQGQAQVA) are compositionally biased toward low complexity. Residues 121-177 (ELKRREEEARREAELLEKQAQELRERQERLEREEAERRAREEAAEAERRRAEEEAAA) show a composition bias toward basic and acidic residues. Low complexity predominate over residues 178-209 (KRAAAAAVEAQQAAAQQAAEAQQETAGAQSAQ). Residues 210-261 (DEARAAAERAAQREAAKKAEDAAREAADKTRAEQEEIRKRREAAEAEARAIR) are compositionally biased toward basic and acidic residues. Residues 277 to 286 (PPKPVEPPKP) show a composition bias toward pro residues. Over residues 298–327 (KPAGAGAARPAVKKPAGAAPATTQAPAGAG) the composition is skewed to low complexity. A compositionally biased stretch (gly residues) spans 356–369 (SSGGVDRGWRGGPK). Residues 472-641 (PRPPVVTVMG…LLQAEVLELK (170 aa)) enclose the tr-type G domain. The G1 stretch occupies residues 481-488 (GHVDHGKT). 481–488 (GHVDHGKT) is a binding site for GTP. The G2 stretch occupies residues 506–510 (GITQH). Positions 527-530 (DTPG) are G3. GTP contacts are provided by residues 527–531 (DTPGH) and 581–584 (NKID). The segment at 581–584 (NKID) is G4. The G5 stretch occupies residues 617–619 (SAK).

This sequence belongs to the TRAFAC class translation factor GTPase superfamily. Classic translation factor GTPase family. IF-2 subfamily.

It localises to the cytoplasm. In terms of biological role, one of the essential components for the initiation of protein synthesis. Protects formylmethionyl-tRNA from spontaneous hydrolysis and promotes its binding to the 30S ribosomal subunits. Also involved in the hydrolysis of GTP during the formation of the 70S ribosomal complex. This Burkholderia ambifaria (strain MC40-6) protein is Translation initiation factor IF-2.